The primary structure comprises 283 residues: Elongation factor Ts (283 aa).

The tract at residues T80–V83 is involved in Mg(2+) ion dislocation from EF-Tu.

It belongs to the EF-Ts family.

It is found in the cytoplasm. Associates with the EF-Tu.GDP complex and induces the exchange of GDP to GTP. It remains bound to the aminoacyl-tRNA.EF-Tu.GTP complex up to the GTP hydrolysis stage on the ribosome. This chain is Elongation factor Ts, found in Pectobacterium atrosepticum (strain SCRI 1043 / ATCC BAA-672) (Erwinia carotovora subsp. atroseptica).